A 140-amino-acid polypeptide reads, in one-letter code: HTH-type transcriptional regulator YfmP (140 aa).

Residues 1–73 enclose the HTH merR-type domain; sequence MEWMKIDQVA…LQELQHFMET (73 aa). Residues 6–25 constitute a DNA-binding region (H-T-H motif); it reads IDQVAKRSGLTKRTIRFYEE.

Repressor of the yfmOP operon. A mutation in yfmP leads to overexpression of yfmO, probably causing a decrease in cellular copper that is eventually responsible for a reduced copper induction of copZA. The polypeptide is HTH-type transcriptional regulator YfmP (yfmP) (Bacillus subtilis (strain 168)).